A 250-amino-acid chain; its full sequence is MSDDDYMNSDDDNDAEKRYVRPIFVRKRRREEDYVATSKDNIHHHPCDWSAKPSQRQNENEQKSTIRLVPVAMNTPKCQEKKKKRKGVGTTSHEATLFEYGESIAGYKCVTTESERDRLKRSHESESSSESEVDVFAFDQAKGISSKVEAEERYARAVRQYWRMTKDEPATLPLPGTPTLAAVSLDMIDDKSVEQFYTMSSALMDANRLDLIRRDRIRWHPDKHRYHKSKVTKLFQAINGLWEQEKTEKR.

Residue Lys17 forms a Glycyl lysine isopeptide (Lys-Gly) (interchain with G-Cter in ubiquitin) linkage. Positions 30-67 (REEDYVATSKDNIHHHPCDWSAKPSQRQNENEQKSTIR) are disordered.

This is an uncharacterized protein from Saccharomyces cerevisiae (strain ATCC 204508 / S288c) (Baker's yeast).